A 410-amino-acid polypeptide reads, in one-letter code: MEQEKRQINLPVFLDYQSTTKTDDRVLEAMMPYFKQFSNPHSRSHSFGWKAESAVELARERVASLINAEAKEVIFTSGATESNNLAIKGVANFYKNKGNHIITVRTEHKCVLDSCRYLETEGFHVTYLDVQKNGILDLELLKSSITDKTILVSVMMVNNEIGVIQPIEKIGKICHEHGIFFHTDAAQAFGKISIDVKKMNIDLLSISGHKIYAPMGIGALYIRKRQPRVRLTPMINGGGQERGMRSGTVPTPLAVGLGEAARIAQEVMEEENIRIRELRDILYNEIKKHLPYVVLNGDYEQRIAGNLNLSFPYVEGESIIMAINNLAVSSGSACTSASLEPSYVLRALNIEKDLEHSSIRFGIGRFTTREEILYAAELIVSSIKKLREMSPLWEMVQEGVDLNNIKWDAH.

Pyridoxal 5'-phosphate contacts are provided by residues Ala-79–Thr-80, Asn-159, Gln-187, and Ser-207–His-209. An N6-(pyridoxal phosphate)lysine modification is found at Lys-210. Thr-248 provides a ligand contact to pyridoxal 5'-phosphate. Catalysis depends on Cys-334, which acts as the Cysteine persulfide intermediate. A [2Fe-2S] cluster-binding site is contributed by Cys-334.

This sequence belongs to the class-V pyridoxal-phosphate-dependent aminotransferase family. NifS/IscS subfamily. As to quaternary structure, homodimer. Forms a heterotetramer with IscU, interacts with other sulfur acceptors. The cofactor is pyridoxal 5'-phosphate.

It localises to the cytoplasm. It catalyses the reaction (sulfur carrier)-H + L-cysteine = (sulfur carrier)-SH + L-alanine. It functions in the pathway cofactor biosynthesis; iron-sulfur cluster biosynthesis. In terms of biological role, master enzyme that delivers sulfur to a number of partners involved in Fe-S cluster assembly, tRNA modification or cofactor biosynthesis. Catalyzes the removal of elemental sulfur atoms from cysteine to produce alanine. Functions as a sulfur delivery protein for Fe-S cluster synthesis onto IscU, an Fe-S scaffold assembly protein, as well as other S acceptor proteins. This is Cysteine desulfurase IscS from Ehrlichia chaffeensis (strain ATCC CRL-10679 / Arkansas).